The sequence spans 344 residues: L-sulfolactate dehydrogenase (344 aa).

The protein belongs to the LDH2/MDH2 oxidoreductase family.

It is found in the cytoplasm. The catalysed reaction is a (2S)-2-hydroxycarboxylate + NAD(+) = a 2-oxocarboxylate + NADH + H(+). It functions in the pathway cofactor biosynthesis; coenzyme M biosynthesis; sulfoacetaldehyde from phosphoenolpyruvate and sulfite: step 3/4. It participates in cofactor biosynthesis; 5,6,7,8-tetrahydromethanopterin biosynthesis. In terms of biological role, catalyzes the reduction of sulfopyruvate to (R)-sulfolactate much more efficiently than the reverse reaction. Also catalyzes the reduction of oxaloacetate, alpha-ketoglutarate, and to a much lower extent, KHTCA, but not pyruvate. Involved in the biosynthesis of both coenzyme M (with (R)-sulfolactate) and methanopterin (with alpha-ketoglutarate). This chain is L-sulfolactate dehydrogenase (comC), found in Methanocaldococcus jannaschii (strain ATCC 43067 / DSM 2661 / JAL-1 / JCM 10045 / NBRC 100440) (Methanococcus jannaschii).